Reading from the N-terminus, the 85-residue chain is MDISRAEQRILHLLAQGGRIDLVRDEAGKLTDAHCYSRDGWRYTGLDMALFRKLKRRRTIASERGQPYRITRRGLQLVRSQPDNC.

It belongs to the UPF0386 family.

The sequence is that of UPF0386 protein HNE_3437 from Hyphomonas neptunium (strain ATCC 15444).